The chain runs to 389 residues: Succinate--CoA ligase [ADP-forming] subunit beta (389 aa).

Residues 9–236 (KELFAKHNVP…KDATDPLELK (228 aa)) form the ATP-grasp domain. Residues Lys45, 52–54 (GRG), Ser94, and Glu99 each bind ATP. The Mg(2+) site is built by Asn191 and Asp205. Substrate contacts are provided by residues Asn256 and 318 to 320 (GIT).

This sequence belongs to the succinate/malate CoA ligase beta subunit family. As to quaternary structure, heterotetramer of two alpha and two beta subunits. It depends on Mg(2+) as a cofactor.

It carries out the reaction succinate + ATP + CoA = succinyl-CoA + ADP + phosphate. It catalyses the reaction GTP + succinate + CoA = succinyl-CoA + GDP + phosphate. Its pathway is carbohydrate metabolism; tricarboxylic acid cycle; succinate from succinyl-CoA (ligase route): step 1/1. Its function is as follows. Succinyl-CoA synthetase functions in the citric acid cycle (TCA), coupling the hydrolysis of succinyl-CoA to the synthesis of either ATP or GTP and thus represents the only step of substrate-level phosphorylation in the TCA. The beta subunit provides nucleotide specificity of the enzyme and binds the substrate succinate, while the binding sites for coenzyme A and phosphate are found in the alpha subunit. The polypeptide is Succinate--CoA ligase [ADP-forming] subunit beta (Mycobacteroides abscessus (strain ATCC 19977 / DSM 44196 / CCUG 20993 / CIP 104536 / JCM 13569 / NCTC 13031 / TMC 1543 / L948) (Mycobacterium abscessus)).